The sequence spans 328 residues: Interleukin-12 subunit beta (328 aa).

Positions M1 to A22 are cleaved as a signal peptide. Residues I23 to K106 enclose the Ig-like C2-type domain. Intrachain disulfides connect C50/C90, C131/C142, and C170/C193. N135 carries an N-linked (GlcNAc...) asparagine glycan. N-linked (GlcNAc...) asparagine glycosylation occurs at N222. The Fibronectin type-III domain occupies P237–S328. Residues C300 and C327 are joined by a disulfide bond. The C-linked (Man) tryptophan glycan is linked to W319.

Belongs to the IL-12B family. Heterodimer with IL12A; disulfide-linked. The heterodimer is known as interleukin IL-12. Heterodimer with IL23A; disulfide-linked. The heterodimer is known as interleukin IL-23. Also secreted as a monomer. Interacts with NBR1; this interaction promotes IL-12 secretion. In terms of processing, known to be C-mannosylated in the recombinant protein; it is not yet known for sure if the wild-type protein is also modified.

It localises to the secreted. Functionally, cytokine that can act as a growth factor for activated T and NK cells, enhance the lytic activity of NK/lymphokine-activated killer cells, and stimulate the production of IFN-gamma by resting PBMC. Associates with IL23A to form the IL-23 interleukin, a heterodimeric cytokine which functions in innate and adaptive immunity. IL-23 may constitute with IL-17 an acute response to infection in peripheral tissues. IL-23 binds to a heterodimeric receptor complex composed of IL12RB1 and IL23R, activates the Jak-Stat signaling cascade, stimulates memory rather than naive T-cells and promotes production of pro-inflammatory cytokines. IL-23 induces autoimmune inflammation and thus may be responsible for autoimmune inflammatory diseases and may be important for tumorigenesis. The polypeptide is Interleukin-12 subunit beta (IL12B) (Homo sapiens (Human)).